The primary structure comprises 384 residues: Farnesyl pyrophosphate synthase 1, mitochondrial (384 aa).

Isopentenyl diphosphate is bound by residues K89, R92, and Q128. D135 and D139 together coordinate Mg(2+). A dimethylallyl diphosphate-binding site is contributed by R144. R145 lines the isopentenyl diphosphate pocket. Positions 232, 233, 271, 288, and 297 each coordinate dimethylallyl diphosphate.

Belongs to the FPP/GGPP synthase family. Mg(2+) serves as cofactor. The FPS1L mRNA accumulates preferentially in inflorescences, whereas the FPS1S mRNA is predominantly expressed in roots and inflorescences.

The protein resides in the mitochondrion. It localises to the cytoplasm. It carries out the reaction isopentenyl diphosphate + dimethylallyl diphosphate = (2E)-geranyl diphosphate + diphosphate. The enzyme catalyses isopentenyl diphosphate + (2E)-geranyl diphosphate = (2E,6E)-farnesyl diphosphate + diphosphate. It functions in the pathway isoprenoid biosynthesis; farnesyl diphosphate biosynthesis; farnesyl diphosphate from geranyl diphosphate and isopentenyl diphosphate: step 1/1. The protein operates within isoprenoid biosynthesis; geranyl diphosphate biosynthesis; geranyl diphosphate from dimethylallyl diphosphate and isopentenyl diphosphate: step 1/1. In terms of biological role, catalyzes the sequential condensation of isopentenyl pyrophosphate with the allylic pyrophosphates, dimethylallyl pyrophosphate, and then with the resultant geranylpyrophosphate to the ultimate product farnesyl pyrophosphate. The protein is Farnesyl pyrophosphate synthase 1, mitochondrial (FPS1) of Arabidopsis thaliana (Mouse-ear cress).